A 77-amino-acid polypeptide reads, in one-letter code: Acyl carrier protein (77 aa).

Positions 1 to 77 (MSVEAKVKKI…DAIEYIRKKS (77 aa)) constitute a Carrier domain. S37 carries the O-(pantetheine 4'-phosphoryl)serine modification.

It belongs to the acyl carrier protein (ACP) family. Post-translationally, 4'-phosphopantetheine is transferred from CoA to a specific serine of apo-ACP by AcpS. This modification is essential for activity because fatty acids are bound in thioester linkage to the sulfhydryl of the prosthetic group.

The protein resides in the cytoplasm. It functions in the pathway lipid metabolism; fatty acid biosynthesis. In terms of biological role, carrier of the growing fatty acid chain in fatty acid biosynthesis. The sequence is that of Acyl carrier protein from Desulforapulum autotrophicum (strain ATCC 43914 / DSM 3382 / VKM B-1955 / HRM2) (Desulfobacterium autotrophicum).